Here is a 72-residue protein sequence, read N- to C-terminus: Translation initiation factor IF-1 (72 aa).

Positions Met-1–Lys-72 constitute an S1-like domain.

This sequence belongs to the IF-1 family. Component of the 30S ribosomal translation pre-initiation complex which assembles on the 30S ribosome in the order IF-2 and IF-3, IF-1 and N-formylmethionyl-tRNA(fMet); mRNA recruitment can occur at any time during PIC assembly.

It is found in the cytoplasm. In terms of biological role, one of the essential components for the initiation of protein synthesis. Stabilizes the binding of IF-2 and IF-3 on the 30S subunit to which N-formylmethionyl-tRNA(fMet) subsequently binds. Helps modulate mRNA selection, yielding the 30S pre-initiation complex (PIC). Upon addition of the 50S ribosomal subunit IF-1, IF-2 and IF-3 are released leaving the mature 70S translation initiation complex. This chain is Translation initiation factor IF-1, found in Cytophaga hutchinsonii (strain ATCC 33406 / DSM 1761 / CIP 103989 / NBRC 15051 / NCIMB 9469 / D465).